Here is a 128-residue protein sequence, read N- to C-terminus: uncharacterized protein (128 aa).

The VOC domain occupies 1–126; it reads MHHIELYVSD…DRIKVELVAP (126 aa).

This is an uncharacterized protein from Bacillus subtilis (strain 168).